Here is a 745-residue protein sequence, read N- to C-terminus: uncharacterized protein (745 aa).

The region spanning 158 to 256 (NQVCDYIELH…HQTPKQYRGD (99 aa)) is the HTH araC/xylS-type domain. 2 DNA-binding regions (H-T-H motif) span residues 175-196 (SELS…TESL) and 223-246 (ITDI…KHFT).

This is an uncharacterized protein from Staphylococcus aureus (strain MW2).